Here is a 423-residue protein sequence, read N- to C-terminus: Gamma-glutamyl phosphate reductase (423 aa).

Positions 1–14 (MTLQAAPRSAAAQQ) are enriched in low complexity. Residues 1–25 (MTLQAAPRSAAAQQREPDLRQEVHD) are disordered. A compositionally biased stretch (basic and acidic residues) spans 15-25 (REPDLRQEVHD).

It belongs to the gamma-glutamyl phosphate reductase family.

It localises to the cytoplasm. It carries out the reaction L-glutamate 5-semialdehyde + phosphate + NADP(+) = L-glutamyl 5-phosphate + NADPH + H(+). It participates in amino-acid biosynthesis; L-proline biosynthesis; L-glutamate 5-semialdehyde from L-glutamate: step 2/2. Catalyzes the NADPH-dependent reduction of L-glutamate 5-phosphate into L-glutamate 5-semialdehyde and phosphate. The product spontaneously undergoes cyclization to form 1-pyrroline-5-carboxylate. This is Gamma-glutamyl phosphate reductase from Mycobacterium marinum (strain ATCC BAA-535 / M).